We begin with the raw amino-acid sequence, 95 residues long: MERAPEDAGPQREPYNEWALELLEELKNEAVRHFPRIWLHGLGQHIYNTYGDTWEGVEAIIRILQQLLFIHYRIGCQHSRIGITPQRRRNGASRS.

Residues 1–42 (MERAPEDAGPQREPYNEWALELLEELKNEAVRHFPRIWLHGL) are homooligomerization. 3 positions are modified to phosphoserine; by host: Ser-79, Ser-93, and Ser-95.

This sequence belongs to the HIV-1 VPR protein family. In terms of assembly, homooligomer, may form homodimer. Interacts with p6-gag region of the Pr55 Gag precursor protein through a (Leu-X-X)4 motif near the C-terminus of the P6gag protein. Interacts with host UNG. May interact with host RAD23A/HHR23A. Interacts with host VPRBP/DCAF1, leading to hijack the CUL4A-RBX1-DDB1-DCAF1/VPRBP complex, mediating ubiquitination of host proteins such as TERT and ZGPAT and arrest of the cell cycle in G2 phase. In terms of processing, phosphorylated on several residues by host. These phosphorylations regulate VPR activity for the nuclear import of the HIV-1 pre-integration complex.

Its subcellular location is the virion. The protein localises to the host nucleus. It is found in the host extracellular space. Its function is as follows. During virus replication, may deplete host UNG protein, and incude G2-M cell cycle arrest. Acts by targeting specific host proteins for degradation by the 26S proteasome, through association with the cellular CUL4A-DDB1 E3 ligase complex by direct interaction with host VPRPB/DCAF-1. Cell cycle arrest reportedly occurs within hours of infection and is not blocked by antiviral agents, suggesting that it is initiated by the VPR carried into the virion. Additionally, VPR induces apoptosis in a cell cycle dependent manner suggesting that these two effects are mechanistically linked. Detected in the serum and cerebrospinal fluid of AIDS patient, VPR may also induce cell death to bystander cells. During virus entry, plays a role in the transport of the viral pre-integration (PIC) complex to the host nucleus. This function is crucial for viral infection of non-dividing macrophages. May act directly at the nuclear pore complex, by binding nucleoporins phenylalanine-glycine (FG)-repeat regions. The protein is Protein Vpr of Homo sapiens (Human).